The following is a 390-amino-acid chain: 3-ketoacyl-CoA thiolase (390 aa).

Catalysis depends on C95, which acts as the Acyl-thioester intermediate. Catalysis depends on proton acceptor residues H346 and C376.

This sequence belongs to the thiolase-like superfamily. Thiolase family. In terms of assembly, heterotetramer of two alpha chains (FadB) and two beta chains (FadA).

It is found in the cytoplasm. The catalysed reaction is an acyl-CoA + acetyl-CoA = a 3-oxoacyl-CoA + CoA. It functions in the pathway lipid metabolism; fatty acid beta-oxidation. Functionally, catalyzes the final step of fatty acid oxidation in which acetyl-CoA is released and the CoA ester of a fatty acid two carbons shorter is formed. The protein is 3-ketoacyl-CoA thiolase of Psychrobacter sp. (strain PRwf-1).